A 1061-amino-acid polypeptide reads, in one-letter code: DNA polymerase (1061 aa).

The interval 773 to 792 (NSEAEESDEDQGPAPFYSPP) is disordered.

The protein belongs to the DNA polymerase type-B family. Heterodimer with the terminal protein; this heterodimer binds to bp 9 to 18 of the genome. Forms a complex with viral pTP, DBP and hosts NFIA and POU2F1/OCT1 for initiation of replication.

It localises to the host nucleus. It catalyses the reaction DNA(n) + a 2'-deoxyribonucleoside 5'-triphosphate = DNA(n+1) + diphosphate. Functionally, eukaryotic-type DNA polymerase involved in viral genomic replication. DNA synthesis is protein primed, and acts in a strand displacement replication. Assembles in complex with viral pTP, DBP, host NFIA and host POU2F1/OCT1 on viral origin of replication. The polymerase covalently transfers dCMP onto pTP, thereby initiating complementary strand synthesis. This chain is DNA polymerase, found in Human adenovirus A serotype 12 (HAdV-12).